We begin with the raw amino-acid sequence, 95 residues long: Aspartyl/glutamyl-tRNA(Asn/Gln) amidotransferase subunit C (95 aa).

It belongs to the GatC family. As to quaternary structure, heterotrimer of A, B and C subunits.

The enzyme catalyses L-glutamyl-tRNA(Gln) + L-glutamine + ATP + H2O = L-glutaminyl-tRNA(Gln) + L-glutamate + ADP + phosphate + H(+). It catalyses the reaction L-aspartyl-tRNA(Asn) + L-glutamine + ATP + H2O = L-asparaginyl-tRNA(Asn) + L-glutamate + ADP + phosphate + 2 H(+). Its function is as follows. Allows the formation of correctly charged Asn-tRNA(Asn) or Gln-tRNA(Gln) through the transamidation of misacylated Asp-tRNA(Asn) or Glu-tRNA(Gln) in organisms which lack either or both of asparaginyl-tRNA or glutaminyl-tRNA synthetases. The reaction takes place in the presence of glutamine and ATP through an activated phospho-Asp-tRNA(Asn) or phospho-Glu-tRNA(Gln). This chain is Aspartyl/glutamyl-tRNA(Asn/Gln) amidotransferase subunit C, found in Desulforapulum autotrophicum (strain ATCC 43914 / DSM 3382 / VKM B-1955 / HRM2) (Desulfobacterium autotrophicum).